We begin with the raw amino-acid sequence, 1252 residues long: Nephrin (1252 aa).

A signal peptide spans 1–35 (MGAKRVTVRGARTSPIHRMSSLTPLLLMGMLTSGL). Topologically, residues 36-1078 (AESPVPTSAP…PGPPRLPLLP (1043 aa)) are extracellular. 6 Ig-like C2-type domains span residues 39-144 (PVPT…VILS), 149-247 (PKVL…ASFT), 256-347 (PPVI…RSIT), 354-448 (PSAI…KSLT), 454-554 (PAQK…TQLV), and 558-649 (PPTN…ETVS). A glycan (N-linked (GlcNAc...) asparagine) is linked at asparagine 54. Intrachain disulfides connect cysteine 67/cysteine 125, cysteine 174/cysteine 231, and cysteine 279/cysteine 331. Residue asparagine 370 is glycosylated (N-linked (GlcNAc...) asparagine). A disulfide bond links cysteine 375 and cysteine 431. Serine 446 is modified (phosphoserine). Cysteines 479 and 542 form a disulfide. 4 N-linked (GlcNAc...) asparagine glycosylation sites follow: asparagine 561, asparagine 578, asparagine 591, and asparagine 722. Residues cysteine 581 and cysteine 637 are joined by a disulfide bond. 2 Ig-like C2-type domains span residues 754–846 (PTIR…LVRL) and 852–953 (PQVD…VSIS). Intrachain disulfides connect cysteine 775–cysteine 830 and cysteine 877–cysteine 934. Positions 957 to 1052 (PPLGLKVVSI…IQVSVTTPGP (96 aa)) constitute a Fibronectin type-III domain. The tract at residues 1043–1067 (IQVSVTTPGPDQAPEDTDHQLPTEL) is disordered. Residues 1079–1099 (VLFAVGGLLLLSNASCVGGLL) traverse the membrane as a helical segment. Over 1100–1252 (WRRRLRRLAE…LPFELRGHLV (153 aa)) the chain is Cytoplasmic. Position 1112 is a phosphoserine (serine 1112). A compositionally biased stretch (basic and acidic residues) spans 1113 to 1127 (EKTEAGSEDRIRNEY). Positions 1113–1144 (EKTEAGSEDRIRNEYEESQWTGDRDTRSSTVS) are disordered. Position 1115 is a phosphothreonine (threonine 1115). Serine 1119 is modified (phosphoserine). Tyrosine 1204 is subject to Phosphotyrosine; by FYN.

It belongs to the immunoglobulin superfamily. Interacts with NPHS2 and with CD2AP (via C-terminal domain). Self-associates (via the Ig-like domains). Also interacts (via the Ig-like domains) with KIRREL1/NEPH1 and KIRREL2; the interaction with KIRREL1 is dependent on KIRREL1 glycosylation. Interacts with KIRREL3. Interacts with MAGI1 (via PDZ 2 and 3 domains) forming a tripartite complex with IGSF5/JAM4. Interacts with DDN; the interaction is direct. Forms a complex with ACTN4, CASK, IQGAP1, MAGI2, SPTAN1 and SPTBN1. Interacts with phosphatidylinositol 3-kinase regulatory subunit PIK3R1; the interaction is reduced by high glucose levels. In terms of processing, phosphorylated at Tyr-1204 by FYN, leading to the recruitment and activation of phospholipase C-gamma-1/PLCG1. Tyrosine phosphorylation is reduced by high glucose levels. Dephosphorylated by tensin TNS2 which leads to reduced binding of NPHN1 to PIK3R1. As to expression, strongly expressed in the podocytes of kidney glomeruli (at protein level) and at lower levels in the spleen.

It is found in the cell membrane. Functionally, seems to play a role in the development or function of the kidney glomerular filtration barrier. Regulates glomerular vascular permeability. May anchor the podocyte slit diaphragm to the actin cytoskeleton. Plays a role in skeletal muscle formation through regulation of myoblast fusion. The polypeptide is Nephrin (Nphs1) (Rattus norvegicus (Rat)).